Reading from the N-terminus, the 102-residue chain is NADH-quinone oxidoreductase subunit K (102 aa).

Transmembrane regions (helical) follow at residues 6-26 (LEHG…GVMV), 30-50 (LLFM…AFVL), and 62-82 (VMFI…LAIV).

This sequence belongs to the complex I subunit 4L family. NDH-1 is composed of 14 different subunits. Subunits NuoA, H, J, K, L, M, N constitute the membrane sector of the complex.

The protein localises to the cell inner membrane. The catalysed reaction is a quinone + NADH + 5 H(+)(in) = a quinol + NAD(+) + 4 H(+)(out). Functionally, NDH-1 shuttles electrons from NADH, via FMN and iron-sulfur (Fe-S) centers, to quinones in the respiratory chain. The immediate electron acceptor for the enzyme in this species is believed to be ubiquinone. Couples the redox reaction to proton translocation (for every two electrons transferred, four hydrogen ions are translocated across the cytoplasmic membrane), and thus conserves the redox energy in a proton gradient. In Acinetobacter baumannii (strain AB307-0294), this protein is NADH-quinone oxidoreductase subunit K.